The sequence spans 431 residues: Trigger factor (431 aa).

A PPIase FKBP-type domain is found at 158–243 (GDLVAVETWS…VAEVSEPVVP (86 aa)).

Belongs to the FKBP-type PPIase family. Tig subfamily.

It localises to the cytoplasm. It carries out the reaction [protein]-peptidylproline (omega=180) = [protein]-peptidylproline (omega=0). In terms of biological role, involved in protein export. Acts as a chaperone by maintaining the newly synthesized protein in an open conformation. Functions as a peptidyl-prolyl cis-trans isomerase. This Stenotrophomonas maltophilia (strain K279a) protein is Trigger factor.